The primary structure comprises 330 residues: MFSIKILLAIILDLFLGDPSCYPHPVRCIGLAINRWEKFYRPRVAQPFWAGVLTVCSVLTLVILTLAVFFTLLAIFPPIVTDFAAVLLLYTTVAIKDLKKESMAVYRALIQGEDLPKTRKLLARIVGRDTENLDRPAIIRATVETVGENLADGIIAPLFWAVALSIFAPLLGVKAIVLASVGAMSYKAINTMDSMLGYKNERYILFGRAAARLDDWANWLPARCTALGIVAISFMAGYNGPQAWKIFKRDRYQHTSPNAGHPEAALAGALNIRLCGPSVYFGNIVEKPYIGNALRAIEPDDIRQANRIVLFTTFLLSLLFLLFRFVLTGL.

A run of 4 helical transmembrane segments spans residues 60–80 (TLVILTLAVFFTLLAIFPPIV), 153–173 (GIIAPLFWAVALSIFAPLLGV), 227–247 (LGIVAISFMAGYNGPQAWKIF), and 308–328 (IVLFTTFLLSLLFLLFRFVLT).

The protein belongs to the CobD/CbiB family.

The protein resides in the cell membrane. It functions in the pathway cofactor biosynthesis; adenosylcobalamin biosynthesis. Its function is as follows. Converts cobyric acid to cobinamide by the addition of aminopropanol on the F carboxylic group. The polypeptide is Cobalamin biosynthesis protein CobD (Desulfotalea psychrophila (strain LSv54 / DSM 12343)).